A 251-amino-acid chain; its full sequence is DNA repair protein RecO (251 aa).

This sequence belongs to the RecO family.

In terms of biological role, involved in DNA repair and RecF pathway recombination. The chain is DNA repair protein RecO from Streptococcus mutans serotype c (strain ATCC 700610 / UA159).